Reading from the N-terminus, the 242-residue chain is NADPH-dependent pterin aldehyde reductase (242 aa).

Position 2 is an N-acetylthreonine (T2). 21-50 (LITGVSKGLGRALALELAKRGHTVIGCARS) serves as a coordination point for NADP(+). A substrate-binding site is contributed by S153. The active-site Proton acceptor is the Y166. K170 is an NADP(+) binding site.

This sequence belongs to the short-chain dehydrogenases/reductases (SDR) family. Homodimer. In terms of tissue distribution, mostly expressed in seeds, and, to a lower extent, in roots, leaves, flowers and siliques.

Its subcellular location is the cytoplasm. Its function is as follows. NADPH-dependent pterin aldehyde reductase involved in pterin aldehyde salvage during folate turnover. Catalyzes the reduction of diverse aromatic and aliphatic aldehydes (e.g. acetaldehyde, n-propanal, 1-naphthaldehyde, benzaldehyde, cinnamaldehyde, n-butanal, n-hexanal, n-pentanal, 2-naphthaldehyde, n-octanal, n-nonanal and n-heptanal), in addition to the conversion of pterin-6-aldehyde (PtCHO) to 6-hydroxymethylpterin (PtCH(2)OH), and the conversion of dihydropterin-6-aldehyde (H(2)PtCHO) to 6-hydroxymethyldihydropterin (H(2)PtCH(2)OH). Cannot reduce the pterin ring. The polypeptide is NADPH-dependent pterin aldehyde reductase (Arabidopsis thaliana (Mouse-ear cress)).